Here is a 1041-residue protein sequence, read N- to C-terminus: MFGSSNPFGQSSGTSPFGSQSLFGQTSNTSSNNPFAPATPFGTSAPFAAQSGSSIFGSTSTGVFGAPQTSSPFASTPTFGASSSPAFGNSTPAFGASPASSPFGGSSGFGQKPLGFSTPQSNPFGNSTQQSQPAFGNTSFGSSTPFGATNTPAFGAPSTPSFGATSTPSFGASSTPAFGATNTPAFGASNSPSFGATNTPAFGASPTPAFGSTGTTFGNTGFGSGGAFGASNTPAFGASGTPAFGASGTPAFGASSTPAFGASSTPAFGASSTPAFGGSSTPSFGASNTSSFSFGSSPAFGQSTSAFGSSAFGSTPSPFGGAQASTPTFGGSGFGQSTFGGQQGGSRAVPYAPTVEADTGTGTQPAGKLESISAMPAYKEKNYEELRWEDYQRGDKGGPLPAGQSPGNAGFGISPSQPNPFSPSPAFGQTSANPTNPFSSSTSTNPFAPQTPTIASSSFGTATSNFGSSPFGVTSSSNLFGSGSSTTTSVFGSSSAFGTTTPSPLFGSSSTPGFGSSSSIFGSAPGQGATPAFGNSQPSTLFNSTPSTGQTGSAFGQTGSAFGQFGQSSAPAFGQNSIFNKPSTGFGNMFSSSSTLTTSSSSPFGQTMPAGVTPFQSAQPGQASNGFGFNNFGQNQAANTTGNAGGLGIFGQGNFGQSPAPLNSVVLQPVAVTNPFGTLPAMPQISINQGGNSPSIQYGISSMPVVDKPAPVRISSLLTSRHLLHRRVRLPARKYRPGENGPKVPFFTDDEESSSTPKADALFIPRENPRALVIRPVQQWSSRDKSILPKEQRPTAPLHDNGKSPDMATDAANHDRNGNGELGATGERIHTSVNANQKPNGTTRSDQASEKERPYKTLSGHRAGEAAIVYEHGADIEALMPKLRQSDYFTEPRIQELAAKERADPGYCRRVRDFVVGRHGYGSIKFMGETDVRRLDLESLVQFNTREVIVYMDESKKPAVGQGLNKPAEVTLLNIKCIDKKTGKQFTEGERVEKYKMMLKKKAEAQGAEFVSFDPVKGEWKFRVEHFSSYKLGDEDEEDGV.

Polar residues predominate over residues 1–34 (MFGSSNPFGQSSGTSPFGSQSLFGQTSNTSSNNP). The disordered stretch occupies residues 1–44 (MFGSSNPFGQSSGTSPFGSQSLFGQTSNTSSNNPFAPATPFGTS). 44 tandem repeats follow at residues 2–3 (FG), 8–9 (FG), 17–18 (FG), 23–24 (FG), 41–42 (FG), 56–57 (FG), 64–65 (FG), 79–80 (FG), 87–88 (FG), 94–95 (FG), 103–104 (FG), 109–110 (FG), 124–125 (FG), 135–136 (FG), 140–141 (FG), 146–147 (FG), 154–155 (FG), 162–163 (FG), 170–171 (FG), 178–179 (FG), 186–187 (FG), 194–195 (FG), 202–203 (FG), 210–211 (FG), 217–218 (FG), 222–223 (FG), 228–229 (FG), 236–237 (FG), 244–245 (FG), 252–253 (FG), 260–261 (FG), 268–269 (FG), 276–277 (FG), 284–285 (FG), 294–295 (FG), 300–301 (FG), 307–308 (FG), 312–313 (FG), 319–320 (FG), 329–330 (FG), 334–335 (FG), 339–340 (FG), 411–412 (FG), and 427–428 (FG). Residues 2–677 (FGSSNPFGQS…QPVAVTNPFG (676 aa)) are 65 X 2 AA repeats of F-G. Residues 98–171 (PASSPFGGSS…FGATSTPSFG (74 aa)) are disordered. Residues 117–171 (STPQSNPFGNSTQQSQPAFGNTSFGSSTPFGATNTPAFGAPSTPSFGATSTPSFG) show a composition bias toward polar residues. Disordered regions lie at residues 315-347 (TPSPFGGAQASTPTFGGSGFGQSTFGGQQGGSR) and 392-447 (QRGD…TNPF). Low complexity predominate over residues 430-447 (TSANPTNPFSSSTSTNPF). 21 repeat units span residues 459–460 (FG), 466–467 (FG), 471–472 (FG), 480–481 (FG), 491–492 (FG), 497–498 (FG), 506–507 (FG), 514–515 (FG), 521–522 (FG), 533–534 (FG), 555–556 (FG), 562–563 (FG), 565–566 (FG), 573–574 (FG), 586–587 (FG), 604–605 (FG), 627–628 (FG), 632–633 (FG), 650–651 (FG), 655–656 (FG), and 676–677 (FG). A compositionally biased stretch (low complexity) spans 517–526 (SSSIFGSAPG). Positions 517–560 (SSSIFGSAPGQGATPAFGNSQPSTLFNSTPSTGQTGSAFGQTGS) are disordered. Over residues 533-560 (FGNSQPSTLFNSTPSTGQTGSAFGQTGS) the composition is skewed to polar residues. The interval 734–860 (KYRPGENGPK…KERPYKTLSG (127 aa)) is disordered. Residues 782 to 793 (SRDKSILPKEQR) are compositionally biased toward basic and acidic residues. The span at 831-846 (TSVNANQKPNGTTRSD) shows a compositional bias: polar residues. Residues 885–1027 (QSDYFTEPRI…GEWKFRVEHF (143 aa)) form the Peptidase S59 domain.

It belongs to the nucleoporin GLFG family. In terms of assembly, part of the nuclear pore complex (NPC). The NPC has an eight-fold symmetrical structure comprising a central transport channel and two rings, the cytoplasmic and nuclear rings, to which eight filaments are attached. The cytoplasmic filaments have loose ends, while the nuclear filaments are joined in a distal ring, forming a nuclear basket. NPCs are highly dynamic in configuration and composition, and can be devided in 3 subcomplexes, the NUP62 subcomplex, the NUP107-160 subcomplex and the NUP93 subcomplex, containing approximately 30 different nucleoporin proteins.

The protein localises to the nucleus. It localises to the nuclear pore complex. This is Nuclear pore complex protein NUP98A from Arabidopsis thaliana (Mouse-ear cress).